We begin with the raw amino-acid sequence, 373 residues long: Probable di-N-acetylchitobiase 1 (373 aa).

Positions 1-20 (MKIFIIISLILTILIIQSKS) are cleaved as a signal peptide. Residues 21-369 (KECPCSNVEL…SGMWGALNSF (349 aa)) form the GH18 domain. The N-linked (GlcNAc...) asparagine glycan is linked to asparagine 48. Chitin-binding positions include 53–54 (PY) and 82–85 (NGVR). Residue asparagine 99 is glycosylated (N-linked (GlcNAc...) asparagine). The Proton donor role is filled by glutamate 127. Chitin-binding positions include tyrosine 128 and 191 to 194 (MDYD). N-linked (GlcNAc...) asparagine glycans are attached at residues asparagine 222, asparagine 250, asparagine 269, asparagine 279, and asparagine 288. Tryptophan 347 contacts chitin.

It belongs to the glycosyl hydrolase 18 family.

The protein resides in the lysosome. Its function is as follows. Involved in the degradation of asparagine-linked glycoproteins. May hydrolyze of N-acetyl-beta-D-glucosamine (1-4)N-acetylglucosamine chitobiose core from the reducing end of the bond. The protein is Probable di-N-acetylchitobiase 1 (ctbs1) of Dictyostelium discoideum (Social amoeba).